The primary structure comprises 148 residues: Small ribosomal subunit protein bS16 (148 aa).

Positions 106–148 are disordered; that stretch reads QAAARAAAGAEDRPATTPKKAKKSGSAEEAEAAPATDAPAAGQ. The span at 137 to 148 shows a compositional bias: low complexity; it reads AAPATDAPAAGQ.

Belongs to the bacterial ribosomal protein bS16 family.

The protein is Small ribosomal subunit protein bS16 of Frankia casuarinae (strain DSM 45818 / CECT 9043 / HFP020203 / CcI3).